A 633-amino-acid chain; its full sequence is Extracellular metalloproteinase 3 (633 aa).

A signal peptide spans 1–18 (MHGLLLAGLLALPMNVLA). Residues 19-246 (HPAEQHASNV…VHNVVDYVAS (228 aa)) constitute a propeptide that is removed on maturation. Asn410 carries an N-linked (GlcNAc...) asparagine glycan. Zn(2+) is bound at residue His429. The active site involves Glu430. A Zn(2+)-binding site is contributed by His433. N-linked (GlcNAc...) asparagine glycosylation is found at Asn480 and Asn622.

This sequence belongs to the peptidase M36 family. It depends on Zn(2+) as a cofactor.

The protein localises to the secreted. Secreted metalloproteinase probably acting as a virulence factor. The polypeptide is Extracellular metalloproteinase 3 (MEP3) (Trichophyton tonsurans (Scalp ringworm fungus)).